The following is a 760-amino-acid chain: Translocation protein SEC63 homolog (760 aa).

The Lumenal portion of the chain corresponds to 1–14 (MAGQQFQYDDSGNT). A helical membrane pass occupies residues 15 to 35 (FFYFLTSFVGLIVIPATYYLW). The Cytoplasmic portion of the chain corresponds to 36–69 (PRDQNAEQIRLKNIRKVYGRCMWYRLRLLKPQPN). Residues 70 to 90 (IIPTVKKIVLLAGWALFLFLA) traverse the membrane as a helical segment. At 91–188 (YKVSKTDREY…LPAWIVDQKN (98 aa)) the chain is on the lumenal side. The J domain occupies 104-165 (NPYEVLNLDP…ESRKNWEEFG (62 aa)). A helical membrane pass occupies residues 189–209 (SILVLLVYGLAFMVILPVVVG). The 345-residue stretch at 197–541 (GLAFMVILPV…LKKKPTPVLL (345 aa)) folds into the SEC63 1 domain. Over 210 to 760 (SWWYRSIRYS…EEEEEEEDDD (551 aa)) the chain is Cytoplasmic. The disordered stretch occupies residues 492 to 617 (AEEQPAEDGQ…DDEAEWQELQ (126 aa)). A compositionally biased stretch (basic residues) spans 518-536 (KGPKKTAKSKKKKPLKKKP). Position 537 is a phosphothreonine (T537). A compositionally biased stretch (basic and acidic residues) spans 582–608 (NRDSQSEKDDGSDRDSDREQDEKQNKD). The stretch at 597-635 (SDREQDEKQNKDDEAEWQELQQSIQRKERALLETKSKIT) forms a coiled coil. Residues 637–714 (PVYSLYFPEE…GLDQIKPLKL (78 aa)) form the SEC63 2 domain. Residues 720 to 760 (KPVPENHPQWDTAIEGDEDQEDSEGFEDSFEEEEEEEEDDD) form a disordered region. The segment covering 733 to 760 (IEGDEDQEDSEGFEDSFEEEEEEEEDDD) has biased composition (acidic residues). A phosphoserine mark is found at S742 and S748.

The ER translocon complex consists of channel-forming core components SEC61A1, SEC61B and SEC61G and different auxiliary components such as SEC62 and SEC63. In terms of tissue distribution, widely expressed, with high levels in the liver.

It is found in the endoplasmic reticulum membrane. In terms of biological role, mediates cotranslational and post-translational transport of certain precursor polypeptides across endoplasmic reticulum (ER). Proposed to play an auxiliary role in recognition of precursors with short and apolar signal peptides. May cooperate with SEC62 and HSPA5/BiP to facilitate targeting of small presecretory proteins into the SEC61 channel-forming translocon complex, triggering channel opening for polypeptide translocation to the ER lumen. Required for efficient PKD1/Polycystin-1 biogenesis and trafficking to the plasma membrane of the primary cilia. The sequence is that of Translocation protein SEC63 homolog from Homo sapiens (Human).